We begin with the raw amino-acid sequence, 373 residues long: GDP-mannose 4,6 dehydratase 2 (373 aa).

Over residues 1–15 the composition is skewed to polar residues; that stretch reads MASENNGSRSDSESI. The disordered stretch occupies residues 1–21; it reads MASENNGSRSDSESITAPKAD. NADP(+) contacts are provided by residues 35–40, Arg-60, 91–92, 113–117, and Tyr-128; these read GITGQD, DL, and LAAQS. Ser-117 is a substrate binding site. Position 162 (Ser-162) interacts with substrate. Residue Ser-162 is part of the active site. Residues Glu-164 and Tyr-185 each act as nucleophile in the active site. Substrate is bound at residue Tyr-185. Residue Lys-189 participates in NADP(+) binding. Residue Asn-214 participates in substrate binding. Residues His-215 and Arg-220 each coordinate NADP(+). Substrate-binding positions include 220–228, Gly-247, Arg-253, and 314–317; these read RGENFVTRK and RPAE.

Belongs to the NAD(P)-dependent epimerase/dehydratase family. GDP-mannose 4,6-dehydratase subfamily. In terms of assembly, homotetramer. Binds to GER1. Requires NADP(+) as cofactor. As to expression, expressed in roots, flowers, siliques, leaves and stems. Not expressed in the root meristem and the proximal part of the elongation zone, or in emerging lateral roots. Expressed in trichomes and guard cells, and in pollen just before anthesis.

It catalyses the reaction GDP-alpha-D-mannose = GDP-4-dehydro-alpha-D-rhamnose + H2O. It functions in the pathway nucleotide-sugar biosynthesis; GDP-L-fucose biosynthesis via de novo pathway; GDP-L-fucose from GDP-alpha-D-mannose: step 1/2. In terms of biological role, catalyzes the conversion of GDP-D-mannose to GDP-4-dehydro-6-deoxy-D-mannose. This Arabidopsis thaliana (Mouse-ear cress) protein is GDP-mannose 4,6 dehydratase 2 (MUR1).